A 514-amino-acid chain; its full sequence is MEYPTFTDARRALDAGETSCEALVSSFLERIDARDNEINAFTSVDQDGALNHARYLDSQRERGNPRPLAGLVLAVKDNICIRGYPVSCGSKMLADFSSLYDATVIDRLRDAGAIFIGKTNCDEFAMGSSNETSHFGPVRNPHAPEYVPGGSSGGSAAAVAAGLCHAALGSDTGGSVRQPAAFCGTVGLKPTYGRVSRSGLVAFASSLDVIGPLTRSAEDAATILNVIAGEDERDSTSAPVDVPDYTEGLGDGVEGLRLGLPEEYFAEGLDDDIRRMVTEQVDRLDDAGATVEEVSLPHTEYGVATYYLVATAEASSNLARYDGIRYGHRADLQETKQALQERREELKEELASARAQGDEARADTLEAQLDDEQSTLDALYTRSRTEGFGDEVKRRIMLGTYALSAGYYDKYYEKAQRVRTLIRHDFERAFEDVDALITPTTPTPPFRLGEKTDDPLEMYLNDIYTVTANLAGLPGLTVPIGEHPDTPGLPVGLQVLGPHFDEALLLRIGAAIME.

Residues Lys76 and Ser151 each act as charge relay system in the active site. Catalysis depends on Ser175, which acts as the Acyl-ester intermediate.

This sequence belongs to the amidase family. GatA subfamily. In terms of assembly, heterotrimer of A, B and C subunits.

It catalyses the reaction L-glutamyl-tRNA(Gln) + L-glutamine + ATP + H2O = L-glutaminyl-tRNA(Gln) + L-glutamate + ADP + phosphate + H(+). In terms of biological role, allows the formation of correctly charged Gln-tRNA(Gln) through the transamidation of misacylated Glu-tRNA(Gln) in organisms which lack glutaminyl-tRNA synthetase. The reaction takes place in the presence of glutamine and ATP through an activated gamma-phospho-Glu-tRNA(Gln). This is Glutamyl-tRNA(Gln) amidotransferase subunit A from Salinibacter ruber (strain DSM 13855 / M31).